Consider the following 518-residue polypeptide: Serine/threonine-protein kinase UL13 (518 aa).

Residues 1–119 form a disordered region; that stretch reads MDESRRQRPA…QAALTAPPSS (119 aa). The Protein kinase domain maps to 151–518; sequence PGARSFGGSG…TNPCARHALS (368 aa). ATP-binding positions include 157–165 and lysine 176; that span reads GGSGGYGDV. The Proton acceptor role is filled by aspartate 277.

It belongs to the protein kinase superfamily. Ser/Thr protein kinase family. Post-translationally, autophosphorylated.

The protein localises to the virion tegument. It localises to the host nucleus. The catalysed reaction is L-seryl-[protein] + ATP = O-phospho-L-seryl-[protein] + ADP + H(+). It carries out the reaction L-threonyl-[protein] + ATP = O-phospho-L-threonyl-[protein] + ADP + H(+). Its function is as follows. Multifunctional serine/threonine kinase that plays a role in several processes including egress of virus particles from the nucleus, modulation of the actin cytoskeleton and regulation of viral and cellular gene expression. Regulates the nuclear localization of viral envelopment factors UL34 and UL31, by phosphorylating the US3 kinase, indicating a role in nuclear egress. Disrupts host nuclear lamins, including LMNA and LMNB1. Phosphorylates the viral Fc receptor composed of glycoproteins E (gE) and I (gI). Phosphorylation of glycoprotein E (gE) by UL13 alters its subcellular localization, from the host early endosome to the plasma membrane. Participates in the transcriptional regulation of cellular and viral mRNAs mainly by phosphorylating the viral transcriptional regulator ICP22. Additional substrates have been identified, including UL41, UL49 or host EF1D. The protein is Serine/threonine-protein kinase UL13 of Homo sapiens (Human).